The following is a 427-amino-acid chain: Mitogen-activated protein kinase 8 (427 aa).

Residues 26–321 form the Protein kinase domain; it reads YQNLKPIGSG…VDEALQHPYI (296 aa). ATP contacts are provided by residues 32-40 and K55; that span reads IGSGAQGIV. C116 is subject to S-nitrosocysteine. The active-site Proton acceptor is D151. Phosphothreonine; by MAP2K7 is present on T183. A TXY motif is present at residues 183-185; that stretch reads TPY. Y185 is subject to Phosphotyrosine; by MAP2K4. Residues M301 and S377 each carry the phosphoserine modification. The tract at residues 371–427 is disordered; that stretch reads VIRGQPSPLGAAVINGSQHPSSSSSVNDVSSMSTDPTLASDTDSSLEAAAGPLGCCR. Residues 387–403 show a composition bias toward low complexity; sequence SQHPSSSSSVNDVSSMS. Polar residues predominate over residues 404–415; sequence TDPTLASDTDSS.

It belongs to the protein kinase superfamily. CMGC Ser/Thr protein kinase family. MAP kinase subfamily. As to quaternary structure, forms a complex with MAPK8IP1 and ARHGEF28. Found in a complex with SH3RF1, RAC1, MAP3K11/MLK3, MAP2K7/MKK7 and MAPK8IP1/JIP1. Found in a complex with SH3RF1, RAC2, MAP3K7/TAK1, MAP2K7/MKK7, MAPK8IP1/JIP1 and MAPK9/JNK2. Binds to at least four scaffolding proteins, MAPK8IP1/JIP-1, MAPK8IP2/JIP-2, MAPK8IP3/JIP-3/JSAP1 and SPAG9/MAPK8IP4/JIP-4. These proteins also bind other components of the JNK signaling pathway. Interacts with TP53 and WWOX. Interacts with JAMP. Interacts with HSF1 (via D domain and preferentially with hyperphosphorylated form); this interaction occurs under both normal growth conditions and immediately upon heat shock. Interacts (phosphorylated form) with NFE2; the interaction phosphorylates NFE2 in undifferentiated cells. Interacts with NFATC4. Interacts with MECOM; regulates JNK signaling. Interacts with PIN1; this interaction mediates MAPK8 conformational changes leading to the binding of MAPK8 to its substrates. Interacts with GRIPAP1. Interacts with POU5F1; phosphorylates POU5F1 at 'Ser-355'. Interacts with STMN2, STMN3 and STMN4. Interacts with HSF4. It depends on Mg(2+) as a cofactor. Dually phosphorylated on Thr-183 and Tyr-185 by MAP2K7 and MAP2K4, which activates the enzyme. Phosphorylated by TAOK2. May be phosphorylated at Thr-183 and Tyr-185 by MAP3K1/MEKK1. Phosphorylated form is more concentrated at synapses than none-phosphorylated.

Its subcellular location is the cytoplasm. The protein resides in the nucleus. The protein localises to the synapse. It carries out the reaction L-seryl-[protein] + ATP = O-phospho-L-seryl-[protein] + ADP + H(+). It catalyses the reaction L-threonyl-[protein] + ATP = O-phospho-L-threonyl-[protein] + ADP + H(+). Activated by threonine and tyrosine phosphorylation by either of two dual specificity kinases, MAP2K4 and MAP2K7. MAP2K4 shows a strong preference for Tyr-185 while MAP2K7 phosphorylates Tyr-183 preferentially. Inhibited by dual specificity phosphatases, such as DUSP1. Inhibited by SERPINB3. In terms of biological role, serine/threonine-protein kinase involved in various processes such as cell proliferation, differentiation, migration, transformation and programmed cell death. Extracellular stimuli such as pro-inflammatory cytokines or physical stress stimulate the stress-activated protein kinase/c-Jun N-terminal kinase (SAP/JNK) signaling pathway. In this cascade, two dual specificity kinases MAP2K4/MKK4 and MAP2K7/MKK7 phosphorylate and activate MAPK8/JNK1. In turn, MAPK8/JNK1 phosphorylates a number of transcription factors, primarily components of AP-1 such as JUN, JDP2 and ATF2 and thus regulates AP-1 transcriptional activity. Phosphorylates the replication licensing factor CDT1, inhibiting the interaction between CDT1 and the histone H4 acetylase HBO1 to replication origins. Loss of this interaction abrogates the acetylation required for replication initiation. Promotes stressed cell apoptosis by phosphorylating key regulatory factors including p53/TP53 and Yes-associates protein YAP1. In T-cells, MAPK8 and MAPK9 are required for polarized differentiation of T-helper cells into Th1 cells. Contributes to the survival of erythroid cells by phosphorylating the antagonist of cell death BAD upon EPO stimulation. Mediates starvation-induced BCL2 phosphorylation, BCL2 dissociation from BECN1, and thus activation of autophagy. Phosphorylates STMN2 and hence regulates microtubule dynamics, controlling neurite elongation in cortical neurons. In the developing brain, through its cytoplasmic activity on STMN2, negatively regulates the rate of exit from multipolar stage and of radial migration from the ventricular zone. Phosphorylates several other substrates including heat shock factor protein 4 (HSF4), the deacetylase SIRT1, ELK1, or the E3 ligase ITCH. Phosphorylates the CLOCK-BMAL1 heterodimer and plays a role in the regulation of the circadian clock. Phosphorylates the heat shock transcription factor HSF1, suppressing HSF1-induced transcriptional activity. Phosphorylates POU5F1, which results in the inhibition of POU5F1's transcriptional activity and enhances its proteasomal degradation. Phosphorylates JUND and this phosphorylation is inhibited in the presence of MEN1. In neurons, phosphorylates SYT4 which captures neuronal dense core vesicles at synapses. Phosphorylates EIF4ENIF1/4-ET in response to oxidative stress, promoting P-body assembly. Phosphorylates SIRT6 in response to oxidative stress, stimulating its mono-ADP-ribosyltransferase activity. Phosphorylates NLRP3, promoting assembly of the NLRP3 inflammasome. Phosphorylates ALKBH5 in response to reactive oxygen species (ROS), promoting ALKBH5 sumoylation and inactivation. Its function is as follows. JNK1 isoforms display different binding patterns: beta-1 preferentially binds to c-Jun, whereas alpha-1, alpha-2, and beta-2 have a similar low level of binding to both c-Jun or ATF2. However, there is no correlation between binding and phosphorylation, which is achieved at about the same efficiency by all isoforms. The chain is Mitogen-activated protein kinase 8 (MAPK8) from Homo sapiens (Human).